The following is a 148-amino-acid chain: Large ribosomal subunit protein bL9 (148 aa).

The protein belongs to the bacterial ribosomal protein bL9 family.

Functionally, binds to the 23S rRNA. The sequence is that of Large ribosomal subunit protein bL9 from Bifidobacterium longum (strain DJO10A).